We begin with the raw amino-acid sequence, 330 residues long: Ketol-acid reductoisomerase (NADP(+)) (330 aa).

Positions 1–181 constitute a KARI N-terminal Rossmann domain; the sequence is MKVFYDSDFK…GLSRAGVIQT (181 aa). NADP(+) is bound by residues 24-27, Arg-47, Ser-52, and 82-85; these read YGSQ and DELQ. The active site involves His-107. Position 133 (Gly-133) interacts with NADP(+). Residues 182–327 enclose the KARI C-terminal knotted domain; the sequence is TFKEETETDL…AKLRKMCGLE (146 aa). Asp-190, Glu-194, Glu-226, and Glu-230 together coordinate Mg(2+). Ser-251 serves as a coordination point for substrate.

It belongs to the ketol-acid reductoisomerase family. Mg(2+) is required as a cofactor.

The catalysed reaction is (2R)-2,3-dihydroxy-3-methylbutanoate + NADP(+) = (2S)-2-acetolactate + NADPH + H(+). It carries out the reaction (2R,3R)-2,3-dihydroxy-3-methylpentanoate + NADP(+) = (S)-2-ethyl-2-hydroxy-3-oxobutanoate + NADPH + H(+). It participates in amino-acid biosynthesis; L-isoleucine biosynthesis; L-isoleucine from 2-oxobutanoate: step 2/4. It functions in the pathway amino-acid biosynthesis; L-valine biosynthesis; L-valine from pyruvate: step 2/4. In terms of biological role, involved in the biosynthesis of branched-chain amino acids (BCAA). Catalyzes an alkyl-migration followed by a ketol-acid reduction of (S)-2-acetolactate (S2AL) to yield (R)-2,3-dihydroxy-isovalerate. In the isomerase reaction, S2AL is rearranged via a Mg-dependent methyl migration to produce 3-hydroxy-3-methyl-2-ketobutyrate (HMKB). In the reductase reaction, this 2-ketoacid undergoes a metal-dependent reduction by NADPH to yield (R)-2,3-dihydroxy-isovalerate. The protein is Ketol-acid reductoisomerase (NADP(+)) of Methanococcus maripaludis (strain C6 / ATCC BAA-1332).